Consider the following 95-residue polypeptide: UPF0223 protein Bsph_1378 (95 aa).

The protein belongs to the UPF0223 family.

This is UPF0223 protein Bsph_1378 from Lysinibacillus sphaericus (strain C3-41).